A 598-amino-acid chain; its full sequence is Nuclear receptor subfamily 4 group A member 1 (598 aa).

Disordered stretches follow at residues 1 to 43 and 128 to 151; these read MPCI…PEAA and GSDY…PPQL. Residues 134 to 145 show a composition bias toward low complexity; the sequence is SPCSAPSPSTPS. The required for nuclear import stretch occupies residues 171 to 466; that stretch reads RAWTEQLPKA…PAEGKLIFCS (296 aa). Residues 264-339 constitute a DNA-binding region (nuclear receptor); that stretch reads EGRCAVCGDN…VGMVKEVVRT (76 aa). 2 NR C4-type zinc fingers span residues 267 to 287 and 303 to 327; these read CAVC…CEGC and CLAN…FQKC. The segment at 268-354 is required for binding NBRE-containing DNA; that stretch reads AVCGDNASCQ…RRGRLPSKPK (87 aa). The interval 299–361 is required for the interaction with RXRA; it reads AKYICLANKD…KPKQPPETSP (63 aa). Ser341 is modified (phosphoserine; by PKA). Residues 341 to 361 form a disordered region; the sequence is SLKGRRGRLPSKPKQPPETSP. Ser351 carries the phosphoserine; by PKA, RPS6KA1 and RPS6KA3 modification. Residues 360–595 form the NR LBD domain; the sequence is SPAHLLTSLV…PIVDKIFMDT (236 aa). The interval 521 to 544 is binds lipopolysaccharide; that stretch reads PRRVEELQNRIASCLKEHVSAEAG. The tract at residues 584–595 is AF-2; it reads PPPIVDKIFMDT.

This sequence belongs to the nuclear hormone receptor family. NR4 subfamily. In terms of assembly, binds the NGFI-B response element (NBRE) as a monomer. Binds the Nur response element (NurRE), consisting of two inverse NBRE-related octanucleotide repeats separated by 6 base-pairs, as a dimer. Interacts (via N-terminus) with NLRP3 (via LRR repeat domain); the interaction is direct, requires binding of NR4A1/Nur77 to NBRE-containing dsDNA and lipopolysaccharide, and leads to non-canonical NLRP3 inflammasome activation. Interacts with GADD45GIP1. Interacts with STK11. Interacts with IFI27. Heterodimer (via DNA-binding domain) with RXRA (via C-terminus); DNA-binding of the heterodimer is enhanced by 9-cis retinoic acid. Competes for the RXRA interaction with EP300 and thereby attenuates EP300 mediated acetylation of RXRA. Interacts with NCOA1. Interacts with NCOA2. Interacts with NCOA3. Zn(2+) is required as a cofactor. Phosphorylated at Ser-351 by RPS6KA1 and RPS6KA3 in response to mitogenic or stress stimuli. Post-translationally, acetylated by p300/CBP, acetylation increases stability. Deacetylated by HDAC1.

It is found in the nucleus. Its subcellular location is the cytoplasm. The protein localises to the cytosol. The protein resides in the mitochondrion. In terms of biological role, orphan nuclear receptor. Binds the NGFI-B response element (NBRE) 5'-AAAGGTCA-3'. Binds 9-cis-retinoic acid outside of its ligand-binding (NR LBD) domain. Participates in energy homeostasis by sequestrating the kinase STK11 in the nucleus, thereby attenuating cytoplasmic AMPK activation. Regulates the inflammatory response in macrophages by regulating metabolic adaptations during inflammation, including repressing the transcription of genes involved in the citric acid cycle (TCA). Inhibits NF-kappa-B signaling by binding to low-affinity NF-kappa-B binding sites, such as at the IL2 promoter. May act concomitantly with NR4A2 in regulating the expression of delayed-early genes during liver regeneration. Plays a role in the vascular response to injury. In the cytosol, upon its detection of both bacterial lipopolysaccharide (LPS) and NBRE-containing mitochondrial DNA released by GSDMD pores during pyroptosis, it promotes non-canonical NLRP3 inflammasome activation by stimulating association of NLRP3 and NEK7. The chain is Nuclear receptor subfamily 4 group A member 1 (NR4A1) from Bos taurus (Bovine).